We begin with the raw amino-acid sequence, 245 residues long: MSMLCYTLIIAFLIGIWAAPKSEDNVPLGSPATSDLSDTSCAQTHEGLKTSRNTDQRHPAPKKAEDQELGSAANIIVDPKLFQKRRFQSSRVLFSTQPPPLSRDEQSVEFLDNEDALNRNIRAKRETHPVHNRGEHSVCDSISVWVANKTNATDIKGNMVTVMVDVNLNNEVYMQYFFETKCRNPNPNPVPSGCRGIDSRHWNSYCTTTQAYVRALTMEGNRASWRFIRIDTACVCVIIRKTDNF.

An N-terminal signal peptide occupies residues 1–18 (MSMLCYTLIIAFLIGIWA). The propeptide occupies 19–125 (APKSEDNVPL…ALNRNIRAKR (107 aa)). A compositionally biased stretch (basic and acidic residues) spans 47 to 66 (GLKTSRNTDQRHPAPKKAED). Residues 47-69 (GLKTSRNTDQRHPAPKKAEDQEL) are disordered. Cystine bridges form between C139-C206, C182-C234, and C194-C236. 2 N-linked (GlcNAc...) asparagine glycosylation sites follow: N148 and N151.

The protein belongs to the NGF-beta family. In terms of assembly, homodimer; non-covalently linked. In terms of tissue distribution, expressed by the venom gland.

Its subcellular location is the secreted. Nerve growth factor is important for the development and maintenance of the sympathetic and sensory nervous systems. It stimulates division and differentiation of sympathetic and embryonic sensory neurons as well as basal forebrain cholinergic neurons in the brain. Its relevance in the snake venom is not clear. However, it has been shown to inhibit metalloproteinase-dependent proteolysis of platelet glycoprotein Ib alpha, suggesting a metalloproteinase inhibition to prevent metalloprotease autodigestion and/or protection against prey proteases. Binds a lipid between the two protein chains in the homodimer. The lipid-bound form promotes histamine relase from mouse mast cells, contrary to the lipid-free form. This Tropidechis carinatus (Australian rough-scaled snake) protein is Venom nerve growth factor 1.